The sequence spans 396 residues: MQNMVILGATGSIGASTLSVISANPFAYSVYGLVANASVDKMLALCVAHKPKVAHMVDEAAAKQLRAVLPATLNIQVTTGMNDLLGLVTAAEVDTVMAAIVGAAGLVPTLEAVKAGKRVLLANKEALVMSGELFIEATKRSGAVLLPVDSEHNAIFQCLPQEVQANLGRCDLAASGISHILLTGSGGPFLRSDLATLAAMTPAQACKHPNWSMGPKISVDSATMMNKGLEFIEARWLFNTQAEQLKVVIHPQSVIHSMVQYRDGSVIAQMGNPDMRTPIAHCMAYPQRIHSGVEPLDFFKVGQLSFYEPDFERFPCLALAMDACAQGQEATTVLNAANEIAVEAFLQGQIGFTQIAKVNEACLVTVPKCPMGSIEDILALDAQTRVYARETLASIA.

5 residues coordinate NADPH: T10, G11, S12, I13, and N123. K124 is a 1-deoxy-D-xylulose 5-phosphate binding site. NADPH is bound at residue E125. A Mn(2+)-binding site is contributed by D149. Residues S150, E151, S185, and H208 each contribute to the 1-deoxy-D-xylulose 5-phosphate site. Mn(2+) is bound at residue E151. NADPH is bound at residue G214. 1-deoxy-D-xylulose 5-phosphate is bound by residues S221, N226, K227, and E230. E230 contributes to the Mn(2+) binding site.

Belongs to the DXR family. Mg(2+) serves as cofactor. Requires Mn(2+) as cofactor.

The enzyme catalyses 2-C-methyl-D-erythritol 4-phosphate + NADP(+) = 1-deoxy-D-xylulose 5-phosphate + NADPH + H(+). The protein operates within isoprenoid biosynthesis; isopentenyl diphosphate biosynthesis via DXP pathway; isopentenyl diphosphate from 1-deoxy-D-xylulose 5-phosphate: step 1/6. In terms of biological role, catalyzes the NADPH-dependent rearrangement and reduction of 1-deoxy-D-xylulose-5-phosphate (DXP) to 2-C-methyl-D-erythritol 4-phosphate (MEP). The protein is 1-deoxy-D-xylulose 5-phosphate reductoisomerase of Shewanella baltica (strain OS155 / ATCC BAA-1091).